The chain runs to 350 residues: Bifunctional methylenetetrahydrofolate dehydrogenase/cyclohydrolase, mitochondrial (350 aa).

The N-terminal 35 residues, 1–35 (MAAASFITSLVTRLLRSAQSGRLHQRPFHLSAVRN), are a transit peptide targeting the mitochondrion. Lys50 is subject to N6-acetyllysine; alternate. A Glycyl lysine isopeptide (Lys-Gly) (interchain with G-Cter in SUMO2); alternate cross-link involves residue Lys50. Substrate is bound by residues 84–88 (YVLNK) and 131–133 (VQL). NAD(+)-binding positions include 200–202 (GRS) and Arg233. 309-313 (PGGVG) serves as a coordination point for substrate.

Belongs to the tetrahydrofolate dehydrogenase/cyclohydrolase family. Homodimer. The cofactor is Mg(2+).

It is found in the mitochondrion. It carries out the reaction (6R)-5,10-methylene-5,6,7,8-tetrahydrofolate + NAD(+) = (6R)-5,10-methenyltetrahydrofolate + NADH. The catalysed reaction is (6R)-5,10-methenyltetrahydrofolate + H2O = (6R)-10-formyltetrahydrofolate + H(+). Functionally, although its dehydrogenase activity is NAD-specific, it can also utilize NADP at a reduced efficiency. This Bos taurus (Bovine) protein is Bifunctional methylenetetrahydrofolate dehydrogenase/cyclohydrolase, mitochondrial (MTHFD2).